Consider the following 124-residue polypeptide: Large ribosomal subunit protein bL17 (124 aa).

The protein belongs to the bacterial ribosomal protein bL17 family. In terms of assembly, part of the 50S ribosomal subunit. Contacts protein L32.

The polypeptide is Large ribosomal subunit protein bL17 (Acidithiobacillus ferrooxidans (strain ATCC 23270 / DSM 14882 / CIP 104768 / NCIMB 8455) (Ferrobacillus ferrooxidans (strain ATCC 23270))).